The chain runs to 678 residues: Endoplasmic reticulum membrane-associated RNA degradation protein (678 aa).

2 helical membrane-spanning segments follow: residues 390-410 (LLAF…LSVF) and 587-607 (VLSL…AVCG).

It localises to the endoplasmic reticulum membrane. May play a role in neuronal migration during embryonic development. The protein is Endoplasmic reticulum membrane-associated RNA degradation protein (ERMARD) of Homo sapiens (Human).